A 153-amino-acid chain; its full sequence is Ubiquitin-conjugating enzyme E2 13 (153 aa).

One can recognise a UBC core domain in the interval 3-149; sequence SLPKRIIKET…AREWTKLYAK (147 aa). Catalysis depends on Cys87, which acts as the Glycyl thioester intermediate. A Glycyl lysine isopeptide (Lys-Gly) (interchain with G-Cter in ubiquitin) cross-link involves residue Lys92.

This sequence belongs to the ubiquitin-conjugating enzyme family. In terms of assembly, heterodimer with MMS2.

It carries out the reaction S-ubiquitinyl-[E1 ubiquitin-activating enzyme]-L-cysteine + [E2 ubiquitin-conjugating enzyme]-L-cysteine = [E1 ubiquitin-activating enzyme]-L-cysteine + S-ubiquitinyl-[E2 ubiquitin-conjugating enzyme]-L-cysteine.. The protein operates within protein modification; protein ubiquitination. Functionally, has a role in the DNA error-free postreplication repair (PRR) pathway. The UBC13/MMS2 heterodimer catalyzes the synthesis of non-canonical poly-ubiquitin chains that are linked through 'Lys-63'. The chain is Ubiquitin-conjugating enzyme E2 13 (UBC13) from Saccharomyces cerevisiae (strain ATCC 204508 / S288c) (Baker's yeast).